The chain runs to 675 residues: Serine/threonine-protein kinase ATG1 (675 aa).

Residues 25–328 (FVIGGEIGKG…FEDFFNDPVV (304 aa)) enclose the Protein kinase domain. ATP contacts are provided by residues 31–39 (IGKGSFAQV) and Lys54. Catalysis depends on Asp168, which acts as the Proton acceptor. Over residues 339-374 (DIPKVEQKPSRDLRSLEADPQREQSELAKSPRERPL) the composition is skewed to basic and acidic residues. Disordered stretches follow at residues 339–455 (DIPK…ERKL) and 501–577 (RLTS…TTRS). 3 stretches are compositionally biased toward polar residues: residues 390 to 399 (ANVSARTGQS), 516 to 538 (ATQQ…SAVQ), and 556 to 565 (ASRSLNTSSA).

This sequence belongs to the protein kinase superfamily. Ser/Thr protein kinase family. APG1/unc-51/ULK1 subfamily. In terms of assembly, homodimer. Forms a ternary complex with ATG13 and ATG17.

The protein localises to the cytoplasm. It localises to the preautophagosomal structure membrane. The enzyme catalyses L-seryl-[protein] + ATP = O-phospho-L-seryl-[protein] + ADP + H(+). It catalyses the reaction L-threonyl-[protein] + ATP = O-phospho-L-threonyl-[protein] + ADP + H(+). Its function is as follows. Serine/threonine protein kinase involved in the cytoplasm to vacuole transport (Cvt) and found to be essential in autophagy, where it is required for the formation of autophagosomes. Involved in the clearance of protein aggregates which cannot be efficiently cleared by the proteasome. Required for selective autophagic degradation of the nucleus (nucleophagy) as well as for mitophagy which contributes to regulate mitochondrial quantity and quality by eliminating the mitochondria to a basal level to fulfill cellular energy requirements and preventing excess ROS production. Also involved in endoplasmic reticulum-specific autophagic process, in selective removal of ER-associated degradation (ERAD) substrates. Plays a key role in ATG9 and ATG23 cycling through the pre-autophagosomal structure and is necessary to promote ATG18 binding to ATG9 through phosphorylation of ATG9. Catalyzes phosphorylation of ATG4, decreasing the interaction between ATG4 and ATG8 and impairing deconjugation of PE-conjugated forms of ATG8. The sequence is that of Serine/threonine-protein kinase ATG1 from Colletotrichum lindemuthianum (Bean anthracnose fungus).